A 1024-amino-acid chain; its full sequence is Hemolysin, plasmid (1024 aa).

Residues 20–32 (AANKLHSAGQSTK) are compositionally biased toward polar residues. The disordered stretch occupies residues 20–39 (AANKLHSAGQSTKDALKKAA). 3 helical membrane passes run 238-260 (IGAG…ILSN), 268-327 (KAAA…LSIA), and 365-411 (DASL…GILE). N6-myristoyl lysine attachment occurs at residues Lys564 and Lys690. Hemolysin-type calcium-binding repeat units follow at residues 732–749 (FGSK…DDLI), 750–767 (EGND…NDTL), 768–785 (SGGN…NDKL), 786–803 (IGVA…DDEF), 816–833 (FGGK…ADLL), and 834–851 (DGGE…NDIY).

Belongs to the RTX prokaryotic toxin (TC 1.C.11) family. Post-translationally, myristoylated by HlyC; the toxin only becomes active when modified. Mainly myristoylated, while a minor fraction is acylated with pentadecanoyl (C15:0; 26%) and heptadecanoyl (C17:0; 6%) fatty acyl groups. Fatty acylation is involved in binding to host membranes and promotes the irreversible insertion of Hemolysin into the host cell membrane. Can be activated by both myristoylation and palmitoylation, but HlyC catalyzes lysine myristoylation.

The protein resides in the secreted. The protein localises to the host cell membrane. Bacterial hemolysins are exotoxins that attack blood cell membranes and cause cell rupture by forming a pore. The protein is Hemolysin, plasmid of Escherichia coli.